The chain runs to 201 residues: Glutathione peroxidase 1 (201 aa).

Serine 32 is modified (phosphoserine). Selenocysteine 47 is a catalytic residue. Residue selenocysteine 47 is a non-standard amino acid, selenocysteine. Lysine 86, lysine 112, and lysine 146 each carry N6-acetyllysine; alternate. An N6-succinyllysine; alternate mark is found at lysine 86, lysine 112, and lysine 146. Serine 195 and serine 199 each carry phosphoserine.

Belongs to the glutathione peroxidase family. As to quaternary structure, homotetramer. Interacts with MIEN1. Post-translationally, during periods of oxidative stress, Sec-47 may react with a superoxide radical, irreversibly lose hydroselenide and be converted to dehydroalanine.

It localises to the cytoplasm. The protein resides in the mitochondrion. It carries out the reaction 2 glutathione + H2O2 = glutathione disulfide + 2 H2O. The catalysed reaction is a hydroperoxy polyunsaturated fatty acid + 2 glutathione = a hydroxy polyunsaturated fatty acid + glutathione disulfide + H2O. It catalyses the reaction tert-butyl hydroperoxide + 2 glutathione = tert-butanol + glutathione disulfide + H2O. The enzyme catalyses cumene hydroperoxide + 2 glutathione = 2-phenylpropan-2-ol + glutathione disulfide + H2O. It carries out the reaction (13S)-hydroperoxy-(9Z,11E)-octadecadienoate + 2 glutathione = (13S)-hydroxy-(9Z,11E)-octadecadienoate + glutathione disulfide + H2O. The catalysed reaction is (9S)-hydroperoxy-(10E,12Z)-octadecadienoate + 2 glutathione = (9S)-hydroxy-(10E,12Z)-octadecadienoate + glutathione disulfide + H2O. It catalyses the reaction (5S)-hydroperoxy-(6E,8Z,11Z,14Z)-eicosatetraenoate + 2 glutathione = (5S)-hydroxy-(6E,8Z,11Z,14Z)-eicosatetraenoate + glutathione disulfide + H2O. The enzyme catalyses (12S)-hydroperoxy-(5Z,8Z,10E,14Z)-eicosatetraenoate + 2 glutathione = (12S)-hydroxy-(5Z,8Z,10E,14Z)-eicosatetraenoate + glutathione disulfide + H2O. It carries out the reaction (12R)-hydroperoxy-(5Z,8Z,10E,14Z)-eicosatetraenoate + 2 glutathione = (12R)-hydroxy-(5Z,8Z,10E,14Z)-eicosatetraenoate + glutathione disulfide + H2O. The catalysed reaction is (15S)-hydroperoxy-(5Z,8Z,11Z,13E)-eicosatetraenoate + 2 glutathione = (15S)-hydroxy-(5Z,8Z,11Z,13E)-eicosatetraenoate + glutathione disulfide + H2O. It catalyses the reaction (5S)-hydroperoxy-(6E,8Z,11Z,14Z,17Z)-eicosapentaenoate + 2 glutathione = (5S)-hydroxy-(6E,8Z,11Z,14Z,17Z)-eicosapentaenoate + glutathione disulfide + H2O. The enzyme catalyses (12S)-hydroperoxy-(5Z,8Z,10E,14Z,17Z)-eicosapentaenoate + 2 glutathione = (12S)-hydroxy-(5Z,8Z,10E,14Z,17Z)-eicosapentaenoate + glutathione disulfide + H2O. It carries out the reaction (15S)-hydroperoxy-(5Z,8Z,11Z,13E,17Z)-eicosapentaenoate + 2 glutathione = (15S)-hydroxy-(5Z,8Z,11Z,13E,17Z)-eicosapentaenoate + glutathione disulfide + H2O. The catalysed reaction is (15S)-hydroperoxy-(11Z,13E)-eicosadienoate + 2 glutathione = (15S)-hydroxy-(11Z,13E)-eicosadienoate + glutathione disulfide + H2O. It catalyses the reaction (17S)-hydroperoxy-(4Z,7Z,10Z,13Z,15E,19Z)-docosahexaenoate + 2 glutathione = (17S)-hydroxy-(4Z,7Z,10Z,13Z,15E,19Z)-docosahexaenoate + glutathione disulfide + H2O. In terms of biological role, catalyzes the reduction of hydroperoxides in a glutathione-dependent manner thus regulating cellular redox homeostasis. Can reduce small soluble hydroperoxides such as H2O2, cumene hydroperoxide and tert-butyl hydroperoxide, as well as several fatty acid-derived hydroperoxides. In platelets catalyzes the reduction of 12-hydroperoxyeicosatetraenoic acid, the primary product of the arachidonate 12-lipoxygenase pathway. The chain is Glutathione peroxidase 1 (GPX1) from Pan troglodytes (Chimpanzee).